The primary structure comprises 315 residues: Zinc finger CCCH domain-containing protein 23 (315 aa).

Residues 1-21 form a disordered region; the sequence is MMIGENKNRPHPTIHIPQWDQ. C3H1-type zinc fingers lie at residues 131 to 157 and 165 to 189; these read YSGTACPEFRKGSCRRGDSCEFSHGVF and RYRTQPCKDGTSCRRRICFFAHTTE.

This chain is Zinc finger CCCH domain-containing protein 23, found in Arabidopsis thaliana (Mouse-ear cress).